The following is a 351-amino-acid chain: Phenylalanine--tRNA ligase alpha subunit (351 aa).

A Mg(2+)-binding site is contributed by E276.

It belongs to the class-II aminoacyl-tRNA synthetase family. Phe-tRNA synthetase alpha subunit type 1 subfamily. In terms of assembly, tetramer of two alpha and two beta subunits. The cofactor is Mg(2+).

Its subcellular location is the cytoplasm. It catalyses the reaction tRNA(Phe) + L-phenylalanine + ATP = L-phenylalanyl-tRNA(Phe) + AMP + diphosphate + H(+). The polypeptide is Phenylalanine--tRNA ligase alpha subunit (Psychrobacter arcticus (strain DSM 17307 / VKM B-2377 / 273-4)).